The following is a 985-amino-acid chain: Vacuolar membrane protease (985 aa).

The Cytoplasmic portion of the chain corresponds to 1–20 (MASSRAQRFNPIAFTPWPVT). Residues 21-41 (CITTIVYLALLIPILVINLVV) form a helical membrane-spanning segment. Residues 42–388 (PSAPETNPKG…MFGTAFAVFR (347 aa)) lie on the Vacuolar side of the membrane. Asn53, Asn116, and Asn119 each carry an N-linked (GlcNAc...) asparagine glycan. Residues His175 and Asp187 each coordinate Zn(2+). The Proton acceptor role is filled by Glu221. Glu222 contributes to the Zn(2+) binding site. Asn238 carries an N-linked (GlcNAc...) asparagine glycan. Positions 247 and 320 each coordinate Zn(2+). Residues 389 to 409 (LHTLFAISVALLVIAPLVIFV) traverse the membrane as a helical segment. At 410–440 (TNRMYLFSMSKSLEGTGDQVSLRGLRGFSRT) the chain is on the cytoplasmic side. Residues 441–461 (PIILVTATTIPICLAYLLEKV) traverse the membrane as a helical segment. Over 462–470 (NPYIVHSSQ) the chain is Vacuolar. Residues 471–491 (FSVWSMMFSAWIFLAWFLACA) form a helical membrane-spanning segment. The Cytoplasmic portion of the chain corresponds to 492 to 502 (ADFFRPSALHR). Residues 503 to 523 (AYSYTWIFIATWIMLVINTVY) form a helical membrane-spanning segment. At 524–527 (ANQK) the chain is on the vacuolar side. The chain crosses the membrane as a helical span at residues 528 to 548 (GIAAGYFLLFYFAGAFLATWI). The Cytoplasmic segment spans residues 549-666 (SYLELFALPR…TLPRWTWVLQ (118 aa)). The interval 563–612 (ARQTTGRRPSSLSSRLLTSSADELRSNASPSTAEFPGAAGEDTDPTESTS) is disordered. Residues 566–582 (TTGRRPSSLSSRLLTSS) are compositionally biased toward low complexity. Residues 667–687 (LLLLAPIVLILVGQLALFLTA) traverse the membrane as a helical segment. Residues 688 to 700 (SMCQVGSDGVSTF) are Vacuolar-facing. The chain crosses the membrane as a helical span at residues 701–721 (VVYLACAVFTTLLCIPLFPLI). Residues 722-727 (HRFTYH) are Cytoplasmic-facing. A helical membrane pass occupies residues 728 to 748 (IPTFLFLVFIGTLIYNLVAFP). The Vacuolar portion of the chain corresponds to 749 to 985 (FSPANRLKTF…VEASHSFTIQ (237 aa)). N-linked (GlcNAc...) asparagine glycosylation is found at Asn767, Asn795, and Asn839.

This sequence belongs to the peptidase M28 family. Zn(2+) serves as cofactor.

The protein localises to the vacuole membrane. May be involved in vacuolar sorting and osmoregulation. This Ajellomyces capsulatus (strain G186AR / H82 / ATCC MYA-2454 / RMSCC 2432) (Darling's disease fungus) protein is Vacuolar membrane protease.